A 164-amino-acid polypeptide reads, in one-letter code: Disulfide bond formation protein B (164 aa).

The Cytoplasmic portion of the chain corresponds to M1–I4. Residues F5–Y21 traverse the membrane as a helical segment. Residues L22–M39 lie on the Periplasmic side of the membrane. A disulfide bridge links C31 with C34. Residues A40–P56 traverse the membrane as a helical segment. The Cytoplasmic segment spans residues Q57–R62. The helical transmembrane segment at I63–G80 threads the bilayer. At R81–D136 the chain is on the periplasmic side. C94 and C122 form a disulfide bridge. A helical membrane pass occupies residues W137–S155. At R156–K164 the chain is on the cytoplasmic side.

The protein belongs to the DsbB family.

The protein localises to the cell inner membrane. Functionally, required for disulfide bond formation in some periplasmic proteins. Acts by oxidizing the DsbA protein. The chain is Disulfide bond formation protein B from Nitrosomonas europaea (strain ATCC 19718 / CIP 103999 / KCTC 2705 / NBRC 14298).